The chain runs to 351 residues: Porphobilinogen deaminase (351 aa).

At C242 the chain carries S-(dipyrrolylmethanemethyl)cysteine. An RPE1 insert domain is found at 257–306 (PRHLSKLAYREVLEGNTEALATAAYKSNRTDASTGLTYKLPLEVEFGKVS).

It belongs to the HMBS family. As to quaternary structure, monomer. The cofactor is dipyrromethane.

The enzyme catalyses 4 porphobilinogen + H2O = hydroxymethylbilane + 4 NH4(+). Its pathway is porphyrin-containing compound metabolism; protoporphyrin-IX biosynthesis; coproporphyrinogen-III from 5-aminolevulinate: step 2/4. Its function is as follows. Tetrapolymerization of the monopyrrole PBG into the hydroxymethylbilane pre-uroporphyrinogen in several discrete steps. This is Porphobilinogen deaminase from Rickettsia conorii (strain ATCC VR-613 / Malish 7).